A 486-amino-acid chain; its full sequence is Ribulose bisphosphate carboxylase large chain (486 aa).

2 residues coordinate substrate: N125 and T175. K177 acts as the Proton acceptor in catalysis. K179 provides a ligand contact to substrate. 3 residues coordinate Mg(2+): K203, D205, and E206. K203 bears the N6-carboxylysine mark. The Proton acceptor role is filled by H295. Substrate contacts are provided by R296, H328, and S380.

This sequence belongs to the RuBisCO large chain family. Type I subfamily. As to quaternary structure, heterohexadecamer of 8 large chains and 8 small chains. It depends on Mg(2+) as a cofactor.

It catalyses the reaction 2 (2R)-3-phosphoglycerate + 2 H(+) = D-ribulose 1,5-bisphosphate + CO2 + H2O. The catalysed reaction is D-ribulose 1,5-bisphosphate + O2 = 2-phosphoglycolate + (2R)-3-phosphoglycerate + 2 H(+). Functionally, ruBisCO catalyzes two reactions: the carboxylation of D-ribulose 1,5-bisphosphate, the primary event in carbon dioxide fixation, as well as the oxidative fragmentation of the pentose substrate. Both reactions occur simultaneously and in competition at the same active site. The protein is Ribulose bisphosphate carboxylase large chain of Bradyrhizobium diazoefficiens (strain JCM 10833 / BCRC 13528 / IAM 13628 / NBRC 14792 / USDA 110).